A 552-amino-acid chain; its full sequence is Arginine--tRNA ligase (552 aa).

The 'HIGH' region motif lies at 123–133 (ANPTGPLTIGR).

Belongs to the class-I aminoacyl-tRNA synthetase family. Monomer.

The protein localises to the cytoplasm. The catalysed reaction is tRNA(Arg) + L-arginine + ATP = L-arginyl-tRNA(Arg) + AMP + diphosphate. This chain is Arginine--tRNA ligase, found in Chlorobium luteolum (strain DSM 273 / BCRC 81028 / 2530) (Pelodictyon luteolum).